Here is a 464-residue protein sequence, read N- to C-terminus: Opioid growth factor receptor-like protein 1 (464 aa).

2 disordered regions span residues 1–91 (MGNL…AKPK) and 309–464 (ENFI…TSSG). A compositionally biased stretch (basic and acidic residues) spans 43 to 59 (QQHDEPEQPKQPPERAG). Over residues 74-86 (AAGAEQGGESTEG) the composition is skewed to low complexity. Positions 316–325 (PKKELPERSK) are enriched in basic and acidic residues. Polar residues predominate over residues 327–342 (QKTPTLPASGSNGQTS). 3 stretches are compositionally biased toward basic and acidic residues: residues 363–382 (SVEEKKGASREPGEEADKPS), 390–400 (PKPRNTEKDSA), and 425–439 (SEKDGEGEDQSKDSE). A compositionally biased stretch (polar residues) spans 452–464 (AQQNATNPQTSSG).

The protein belongs to the opioid growth factor receptor family.

The protein is Opioid growth factor receptor-like protein 1 (Ogfrl1) of Mus musculus (Mouse).